Here is a 102-residue protein sequence, read N- to C-terminus: Large ribosomal subunit protein bL21 (102 aa).

It belongs to the bacterial ribosomal protein bL21 family. Part of the 50S ribosomal subunit. Contacts protein L20.

Functionally, this protein binds to 23S rRNA in the presence of protein L20. This Leptospira biflexa serovar Patoc (strain Patoc 1 / Ames) protein is Large ribosomal subunit protein bL21.